Here is a 259-residue protein sequence, read N- to C-terminus: Thiamine thiazole synthase (259 aa).

NAD(+) is bound by residues alanine 33, glutamate 52–arginine 53, glycine 60, valine 124, and histidine 152–aspartate 154. Aspartate 154 and histidine 169 together coordinate Fe cation. An NAD(+)-binding site is contributed by methionine 219. Arginine 229 provides a ligand contact to glycine.

The protein belongs to the THI4 family. As to quaternary structure, homooctamer; tetramer of dimers. Requires Fe(2+) as cofactor.

It carries out the reaction hydrogen sulfide + glycine + NAD(+) = ADP-5-ethyl-4-methylthiazole-2-carboxylate + nicotinamide + 3 H2O + H(+). Its pathway is cofactor biosynthesis; thiamine diphosphate biosynthesis. Its function is as follows. Involved in the biosynthesis of the thiazole moiety of thiamine. Catalyzes the conversion of NAD and glycine to adenosine diphosphate 5-(2-hydroxyethyl)-4-methylthiazole-2-carboxylate (ADT), an adenylated thiazole intermediate, using free sulfide as a source of sulfur. The polypeptide is Thiamine thiazole synthase (Pyrobaculum neutrophilum (strain DSM 2338 / JCM 9278 / NBRC 100436 / V24Sta) (Thermoproteus neutrophilus)).